The chain runs to 96 residues: DNA-directed RNA polymerase subunit Rpo11 (96 aa).

Belongs to the archaeal Rpo11/eukaryotic RPB11/RPC19 RNA polymerase subunit family. Part of the RNA polymerase complex.

It is found in the cytoplasm. It catalyses the reaction RNA(n) + a ribonucleoside 5'-triphosphate = RNA(n+1) + diphosphate. Functionally, DNA-dependent RNA polymerase (RNAP) catalyzes the transcription of DNA into RNA using the four ribonucleoside triphosphates as substrates. The sequence is that of DNA-directed RNA polymerase subunit Rpo11 from Methanococcus maripaludis (strain DSM 14266 / JCM 13030 / NBRC 101832 / S2 / LL).